We begin with the raw amino-acid sequence, 159 residues long: Endoribonuclease YbeY (159 aa).

Residues His-125, His-129, and His-135 each contribute to the Zn(2+) site.

This sequence belongs to the endoribonuclease YbeY family. It depends on Zn(2+) as a cofactor.

The protein resides in the cytoplasm. Single strand-specific metallo-endoribonuclease involved in late-stage 70S ribosome quality control and in maturation of the 3' terminus of the 16S rRNA. This chain is Endoribonuclease YbeY, found in Enterococcus faecalis (strain ATCC 700802 / V583).